A 549-amino-acid polypeptide reads, in one-letter code: Glucose-6-phosphate isomerase (549 aa).

The active-site Proton donor is Glu355. Active-site residues include His386 and Lys514.

This sequence belongs to the GPI family.

Its subcellular location is the cytoplasm. The catalysed reaction is alpha-D-glucose 6-phosphate = beta-D-fructose 6-phosphate. The protein operates within carbohydrate biosynthesis; gluconeogenesis. It functions in the pathway carbohydrate degradation; glycolysis; D-glyceraldehyde 3-phosphate and glycerone phosphate from D-glucose: step 2/4. In terms of biological role, catalyzes the reversible isomerization of glucose-6-phosphate to fructose-6-phosphate. This is Glucose-6-phosphate isomerase from Pectobacterium carotovorum subsp. carotovorum (strain PC1).